We begin with the raw amino-acid sequence, 481 residues long: ATP synthase subunit beta (481 aa).

Glycine 154–threonine 161 contributes to the ATP binding site.

This sequence belongs to the ATPase alpha/beta chains family. F-type ATPases have 2 components, CF(1) - the catalytic core - and CF(0) - the membrane proton channel. CF(1) has five subunits: alpha(3), beta(3), gamma(1), delta(1), epsilon(1). CF(0) has three main subunits: a(1), b(2) and c(9-12). The alpha and beta chains form an alternating ring which encloses part of the gamma chain. CF(1) is attached to CF(0) by a central stalk formed by the gamma and epsilon chains, while a peripheral stalk is formed by the delta and b chains.

The protein resides in the cell inner membrane. The enzyme catalyses ATP + H2O + 4 H(+)(in) = ADP + phosphate + 5 H(+)(out). Produces ATP from ADP in the presence of a proton gradient across the membrane. The catalytic sites are hosted primarily by the beta subunits. In Novosphingobium aromaticivorans (strain ATCC 700278 / DSM 12444 / CCUG 56034 / CIP 105152 / NBRC 16084 / F199), this protein is ATP synthase subunit beta.